The chain runs to 123 residues: Seminal vesicle secretory protein 5 (123 aa).

The N-terminal stretch at 1–21 (MSPTGFFLLTVLLVLVTEAAS) is a signal peptide. A disordered region spans residues 50-123 (GSSSTFGAFS…TKVKTRITRK (74 aa)). Over residues 64–75 (SRSNFKSKSPSS) the composition is skewed to low complexity. The segment covering 77–87 (TREKVNEESRS) has biased composition (basic and acidic residues).

The protein belongs to the SVP2/SVP5/SVP6 family. In terms of tissue distribution, testis.

Its subcellular location is the secreted. It localises to the extracellular space. This is Seminal vesicle secretory protein 5 (Svs5) from Rattus norvegicus (Rat).